Reading from the N-terminus, the 174-residue chain is Shikimate kinase (174 aa).

An ATP-binding site is contributed by 15-20; that stretch reads GTGKST. Ser19 contacts Mg(2+). Residues Asp37, Arg61, and Gly82 each contribute to the substrate site. An ATP-binding site is contributed by Arg120. Residue Arg138 coordinates substrate.

The protein belongs to the shikimate kinase family. In terms of assembly, monomer. Requires Mg(2+) as cofactor.

The protein localises to the cytoplasm. The catalysed reaction is shikimate + ATP = 3-phosphoshikimate + ADP + H(+). Its pathway is metabolic intermediate biosynthesis; chorismate biosynthesis; chorismate from D-erythrose 4-phosphate and phosphoenolpyruvate: step 5/7. Functionally, catalyzes the specific phosphorylation of the 3-hydroxyl group of shikimic acid using ATP as a cosubstrate. In Staphylococcus aureus (strain Mu3 / ATCC 700698), this protein is Shikimate kinase.